Reading from the N-terminus, the 143-residue chain is Transcriptional regulator MraZ (143 aa).

2 SpoVT-AbrB domains span residues 5–47 (EYQH…PMHE) and 76–119 (ATEC…SKVI).

This sequence belongs to the MraZ family. As to quaternary structure, forms oligomers.

The protein localises to the cytoplasm. It is found in the nucleoid. The sequence is that of Transcriptional regulator MraZ from Bacillus subtilis (strain 168).